A 495-amino-acid polypeptide reads, in one-letter code: Calcium-dependent protein kinase 11 (495 aa).

Positions 26-284 (YLLGKKLGQG…AHEALCHPWI (259 aa)) constitute a Protein kinase domain. Residues 32–40 (LGQGQFGTT) and Lys55 contribute to the ATP site. The active-site Proton acceptor is Asp150. Residue Ser190 is modified to Phosphoserine. The interval 290–320 (APDKPLDPAVLSRLKQFSQMNKIKKMALRVI) is autoinhibitory domain. EF-hand domains follow at residues 327–362 (EEIGGLKELFKMIDTDNSGTITFEELKAGLKRVGSE), 363–398 (LMESEIKSLMDAADIDNSGTIDYGEFLAATLHMNKM), 399–434 (EREENLVAAFSYFDKDGSGYITIDELQSACTEFGLC), and 438–468 (LDDMIKEIDLDNDGKIDFSEFTAMMRKGDGV). Asp340, Asp342, Ser344, Thr346, Glu351, Asp376, Asp378, Ser380, Thr382, Glu387, Asp412, Asp414, Ser416, Tyr418, Glu423, Asp446, Asp448, Asp450, Lys452, and Glu457 together coordinate Ca(2+).

The protein belongs to the protein kinase superfamily. Ser/Thr protein kinase family. CDPK subfamily. As to quaternary structure, interacts with Di19.

It is found in the cytoplasm. The protein resides in the nucleus. The enzyme catalyses L-seryl-[protein] + ATP = O-phospho-L-seryl-[protein] + ADP + H(+). The catalysed reaction is L-threonyl-[protein] + ATP = O-phospho-L-threonyl-[protein] + ADP + H(+). Activated by calcium. Autophosphorylation may play an important role in the regulation of the kinase activity. Functionally, may play a role in signal transduction pathways that involve calcium as a second messenger. Functions as a regulator of the calcium-mediated abscisic acid (ABA) signaling pathway. Phosphorylates ABA-responsive transcription factors ABF1 and ABF4 in vitro. In Arabidopsis thaliana (Mouse-ear cress), this protein is Calcium-dependent protein kinase 11 (CPK11).